The following is a 603-amino-acid chain: Aspartate--tRNA(Asp/Asn) ligase (603 aa).

An aspartate region spans residues Gln205–Lys208. Arg227 contacts L-aspartate. Residues Arg227–Glu229 and Gln236 each bind ATP. An L-aspartate-binding site is contributed by His463. Residue Glu497 participates in ATP binding. Arg504 contributes to the L-aspartate binding site. Position 549–552 (Gly549–Arg552) interacts with ATP.

The protein belongs to the class-II aminoacyl-tRNA synthetase family. Type 1 subfamily. As to quaternary structure, homodimer.

The protein localises to the cytoplasm. The enzyme catalyses tRNA(Asx) + L-aspartate + ATP = L-aspartyl-tRNA(Asx) + AMP + diphosphate. In terms of biological role, aspartyl-tRNA synthetase with relaxed tRNA specificity since it is able to aspartylate not only its cognate tRNA(Asp) but also tRNA(Asn). Reaction proceeds in two steps: L-aspartate is first activated by ATP to form Asp-AMP and then transferred to the acceptor end of tRNA(Asp/Asn). In Anaeromyxobacter dehalogenans (strain 2CP-1 / ATCC BAA-258), this protein is Aspartate--tRNA(Asp/Asn) ligase.